Consider the following 414-residue polypeptide: NFATC2-interacting protein (414 aa).

The interval 1 to 42 (MAEPLRRRGPRSRGGRASRGARRARAARGRCPRAPRSPTRLI) is disordered. Residues 7–33 (RRGPRSRGGRASRGARRARAARGRCPR) are compositionally biased toward basic residues. 2 positions are modified to phosphoserine: serine 52 and serine 54. Residues 63–118 (ADPGEVPVARLPAPAAPEQDSDSDSEGAAEGPAGAPRTLVRRRRRLLDPGEAPVVP) form a disordered region. Residues 68 to 79 (VPVARLPAPAAP) are compositionally biased toward low complexity. Residues serine 83, serine 85, and serine 87 each carry the phosphoserine modification. Residues 90–100 (AAEGPAGAPRT) are compositionally biased toward low complexity. Position 121 is a phosphoserine (serine 121). A Glycyl lysine isopeptide (Lys-Gly) (interchain with G-Cter in SUMO2) cross-link involves residue lysine 123. The segment at 139–208 (KLCPSEPEDE…SSRNKSRKHT (70 aa)) is disordered. The stretch at 170 to 229 (KKKLRKKHEKEEKKMEEFPDQDISPLPQPSSRNKSRKHTEALQKLREVNKRLQDLRSCLS) forms a coiled coil. 3 positions are modified to phosphoserine: serine 193, serine 199, and serine 309. Phosphothreonine is present on residues threonine 311 and threonine 313. A Ubiquitin-like domain is found at 343–414 (LRLRVQGKEK…ESGDLIEVWG (72 aa)). Residues serine 364 and serine 385 each carry the phosphoserine modification.

In terms of assembly, interacts with NFATC2, TRAF1, TRAF2 and PRMT1. Interacts with UBE2I/UBC9. In terms of processing, methylation at the N-terminus by PRMT1 modulates interaction with the NFAT complex and results in augmented cytokine production.

The protein resides in the nucleus. It localises to the cytoplasm. Its function is as follows. In T-helper 2 (Th2) cells, regulates the magnitude of NFAT-driven transcription of a specific subset of cytokine genes, including IL3, IL4, IL5 and IL13, but not IL2. Recruits PRMT1 to the IL4 promoter; this leads to enhancement of histone H4 'Arg-3'-methylation and facilitates subsequent histone acetylation at the IL4 locus, thus promotes robust cytokine expression. Down-regulates formation of poly-SUMO chains by UBE2I/UBC9. The protein is NFATC2-interacting protein (Nfatc2ip) of Rattus norvegicus (Rat).